The following is a 653-amino-acid chain: Chaperone protein DnaK (653 aa).

Thr-198 is subject to Phosphothreonine; by autocatalysis. Residues 608-617 (DPEAAAHAAG) show a composition bias toward low complexity. The segment at 608 to 653 (DPEAAAHAAGMHGGAATGGGDGANKHGKGAEDVVEAEFEEVNDDKK) is disordered. The segment covering 618–629 (MHGGAATGGGDG) has biased composition (gly residues). Residues 639 to 653 (DVVEAEFEEVNDDKK) are compositionally biased toward acidic residues.

It belongs to the heat shock protein 70 family.

In terms of biological role, acts as a chaperone. The chain is Chaperone protein DnaK from Magnetococcus marinus (strain ATCC BAA-1437 / JCM 17883 / MC-1).